The chain runs to 324 residues: Pancreas transcription factor 1 subunit alpha (324 aa).

The 53-residue stretch at 160-212 (QLRQAANVRERRRMQSINDAFEGLRSHIPTLPYEKRLSKVDTLRLAIGYINFL) folds into the bHLH domain. The tract at residues 302 to 324 (DPRKLNSKSFDNIENEPPFEFVS) is disordered.

In terms of assembly, component of the pancreas transcription factor 1 complex (PTF1) which is composed of TCF3/p75, TCF12/p64 and PTF1A/p48. TCF3 is responsible for the nuclear import of the p48/p64 complex. Interacts with TCF3 and RBPSUH/RBP-Jkappa. In terms of tissue distribution, expressed in precursors of pancreatic islets, acini and ducts.

Its subcellular location is the nucleus. The protein resides in the cytoplasm. Functionally, transcription factor implicated in the cell fate determination in various organs. Binds to the E-box consensus sequence 5'-CANNTG-3'. Plays a role in early and late pancreas development and differentiation. Important for determining whether cells allocated to the pancreatic buds continue towards pancreatic organogenesis or revert back to duodenal fates. May be involved in the maintenance of exocrine pancreas-specific gene expression including ELA1 and amylase. Required for the formation of pancreatic acinar and ductal cells. Plays an important role in cerebellar development. Directly regulated by FOXN4 and RORC during retinal development, FOXN4-PTF1A pathway plays a central role in directing the differentiation of retinal progenitors towards horizontal and amacrine fates. This Mus musculus (Mouse) protein is Pancreas transcription factor 1 subunit alpha (Ptf1a).